A 124-amino-acid chain; its full sequence is Small ribosomal subunit protein uS13 (124 aa).

The interval 89–124 (GRRHRQGLPVRGQRTKTNARTRKGPKRTVAGKKKAK) is disordered. The segment covering 101–124 (QRTKTNARTRKGPKRTVAGKKKAK) has biased composition (basic residues).

Belongs to the universal ribosomal protein uS13 family. As to quaternary structure, part of the 30S ribosomal subunit. Forms a loose heterodimer with protein S19. Forms two bridges to the 50S subunit in the 70S ribosome.

Its function is as follows. Located at the top of the head of the 30S subunit, it contacts several helices of the 16S rRNA. In the 70S ribosome it contacts the 23S rRNA (bridge B1a) and protein L5 of the 50S subunit (bridge B1b), connecting the 2 subunits; these bridges are implicated in subunit movement. Contacts the tRNAs in the A and P-sites. This is Small ribosomal subunit protein uS13 from Nocardioides sp. (strain ATCC BAA-499 / JS614).